Reading from the N-terminus, the 453-residue chain is Bifunctional protein GlmU (453 aa).

Residues Met-1 to Lys-225 are pyrophosphorylase. UDP-N-acetyl-alpha-D-glucosamine contacts are provided by residues Leu-6–Gly-9, Lys-20, Gln-71, Gly-76–Thr-77, Tyr-98–Asp-100, Gly-135, Glu-150, Asn-165, and Asn-223. Asp-100 is a binding site for Mg(2+). Asn-223 provides a ligand contact to Mg(2+). A linker region spans residues Ala-226–Asp-246. An N-acetyltransferase region spans residues Gly-247 to Ser-453. Residues Arg-329 and Lys-347 each contribute to the UDP-N-acetyl-alpha-D-glucosamine site. The active-site Proton acceptor is His-359. Residues Tyr-362 and Asn-373 each contribute to the UDP-N-acetyl-alpha-D-glucosamine site. Acetyl-CoA contacts are provided by residues Ala-376, Asn-382–Tyr-383, Ser-401, and Ala-419.

The protein in the N-terminal section; belongs to the N-acetylglucosamine-1-phosphate uridyltransferase family. This sequence in the C-terminal section; belongs to the transferase hexapeptide repeat family. Homotrimer. It depends on Mg(2+) as a cofactor.

The protein localises to the cytoplasm. The catalysed reaction is alpha-D-glucosamine 1-phosphate + acetyl-CoA = N-acetyl-alpha-D-glucosamine 1-phosphate + CoA + H(+). It carries out the reaction N-acetyl-alpha-D-glucosamine 1-phosphate + UTP + H(+) = UDP-N-acetyl-alpha-D-glucosamine + diphosphate. It participates in nucleotide-sugar biosynthesis; UDP-N-acetyl-alpha-D-glucosamine biosynthesis; N-acetyl-alpha-D-glucosamine 1-phosphate from alpha-D-glucosamine 6-phosphate (route II): step 2/2. It functions in the pathway nucleotide-sugar biosynthesis; UDP-N-acetyl-alpha-D-glucosamine biosynthesis; UDP-N-acetyl-alpha-D-glucosamine from N-acetyl-alpha-D-glucosamine 1-phosphate: step 1/1. Its pathway is bacterial outer membrane biogenesis; LPS lipid A biosynthesis. Its function is as follows. Catalyzes the last two sequential reactions in the de novo biosynthetic pathway for UDP-N-acetylglucosamine (UDP-GlcNAc). The C-terminal domain catalyzes the transfer of acetyl group from acetyl coenzyme A to glucosamine-1-phosphate (GlcN-1-P) to produce N-acetylglucosamine-1-phosphate (GlcNAc-1-P), which is converted into UDP-GlcNAc by the transfer of uridine 5-monophosphate (from uridine 5-triphosphate), a reaction catalyzed by the N-terminal domain. This is Bifunctional protein GlmU from Burkholderia lata (strain ATCC 17760 / DSM 23089 / LMG 22485 / NCIMB 9086 / R18194 / 383).